The chain runs to 328 residues: Malate dehydrogenase 2 (328 aa).

An NAD(+)-binding site is contributed by 12-18; the sequence is GAAGQIA. Substrate contacts are provided by Arg93 and Arg99. NAD(+) contacts are provided by residues Asn106, Gln113, and 130 to 132; that span reads VGN. Residues Asn132 and Arg163 each contribute to the substrate site. The Proton acceptor role is filled by His188.

The protein belongs to the LDH/MDH superfamily. MDH type 2 family.

It catalyses the reaction (S)-malate + NAD(+) = oxaloacetate + NADH + H(+). Its function is as follows. Catalyzes the reversible oxidation of malate to oxaloacetate. The sequence is that of Malate dehydrogenase 2 from Burkholderia vietnamiensis (strain G4 / LMG 22486) (Burkholderia cepacia (strain R1808)).